Here is a 334-residue protein sequence, read N- to C-terminus: Glycerol-3-phosphate dehydrogenase [NAD(P)+] (334 aa).

NADPH is bound by residues Ser14, Tyr15, His35, and Lys109. 3 residues coordinate sn-glycerol 3-phosphate: Lys109, Gly138, and Thr140. Position 142 (Ala142) interacts with NADPH. Positions 194, 247, 257, 258, and 259 each coordinate sn-glycerol 3-phosphate. The Proton acceptor role is filled by Lys194. Arg258 contributes to the NADPH binding site. Val282 and Glu284 together coordinate NADPH.

It belongs to the NAD-dependent glycerol-3-phosphate dehydrogenase family.

It localises to the cytoplasm. The enzyme catalyses sn-glycerol 3-phosphate + NAD(+) = dihydroxyacetone phosphate + NADH + H(+). It catalyses the reaction sn-glycerol 3-phosphate + NADP(+) = dihydroxyacetone phosphate + NADPH + H(+). The protein operates within membrane lipid metabolism; glycerophospholipid metabolism. Catalyzes the reduction of the glycolytic intermediate dihydroxyacetone phosphate (DHAP) to sn-glycerol 3-phosphate (G3P), the key precursor for phospholipid synthesis. In Aeromonas hydrophila subsp. hydrophila (strain ATCC 7966 / DSM 30187 / BCRC 13018 / CCUG 14551 / JCM 1027 / KCTC 2358 / NCIMB 9240 / NCTC 8049), this protein is Glycerol-3-phosphate dehydrogenase [NAD(P)+].